Reading from the N-terminus, the 602-residue chain is Aspartate--tRNA(Asp/Asn) ligase (602 aa).

Position 170 (Glu170) interacts with L-aspartate. Positions 194–197 (QLFK) are aspartate. Arg216 contacts L-aspartate. ATP is bound by residues 216 to 218 (RDE) and Gln225. His448 is a binding site for L-aspartate. Glu482 contacts ATP. Arg489 lines the L-aspartate pocket. 534 to 537 (GWDR) is a binding site for ATP. The disordered stretch occupies residues 559-602 (GGVDPLTNAPAPITAQQRKESGVDAKPEPKGDAASAKPDAPADK). Over residues 575–589 (QRKESGVDAKPEPKG) the composition is skewed to basic and acidic residues. A compositionally biased stretch (low complexity) spans 590-602 (DAASAKPDAPADK).

It belongs to the class-II aminoacyl-tRNA synthetase family. Type 1 subfamily. As to quaternary structure, homodimer.

The protein localises to the cytoplasm. It carries out the reaction tRNA(Asx) + L-aspartate + ATP = L-aspartyl-tRNA(Asx) + AMP + diphosphate. Its function is as follows. Aspartyl-tRNA synthetase with relaxed tRNA specificity since it is able to aspartylate not only its cognate tRNA(Asp) but also tRNA(Asn). Reaction proceeds in two steps: L-aspartate is first activated by ATP to form Asp-AMP and then transferred to the acceptor end of tRNA(Asp/Asn). This Rhodococcus jostii (strain RHA1) protein is Aspartate--tRNA(Asp/Asn) ligase.